We begin with the raw amino-acid sequence, 2542 residues long: Unconventional myosin-IXa (2542 aa).

Positions 14-112 (NEHTLRIYPG…YRFLLREKNL (99 aa)) constitute a Ras-associating domain. A Myosin motor domain is found at 146 to 1017 (KDFDDLCSLP…ERQHLQDLLH (872 aa)). A helical transmembrane segment spans residues 175 to 195 (IYTYVGSILIAINPFKFLPIY). 239-246 (GESGSGKT) lines the ATP pocket. At serine 755 the chain carries Phosphoserine. The segment at 908 to 919 (QAEPYFVKCIRS) is actin-binding. 5 IQ domains span residues 1021-1041 (LRRI…QQFL), 1043-1072 (LRQA…EKDA), 1075-1104 (MASA…AAVI), 1116-1145 (RHKA…KIIL), and 1139-1168 (QRNK…EKLR). The segment at 1022–1163 (RRIVLLQRWF…RARQRCNALK (142 aa)) is neck or regulatory domain. Residues 1164–2505 (EEKLREAKLE…LKNVKNSPQK (1342 aa)) form a tail region. The span at 1221–1240 (RESSMDFSKESPDKQQERGR) shows a compositional bias: basic and acidic residues. The segment at 1221-1276 (RESSMDFSKESPDKQQERGRRQSGTDLQEDVIVRQRPKSLEDLHQKKVGRAKRESR) is disordered. Serine 1243 carries the post-translational modification Phosphoserine. Threonine 1245 carries the post-translational modification Phosphothreonine. Residue serine 1259 is modified to Phosphoserine. Positions 1265–1292 (QKKVGRAKRESRRMRELEQAIFSLELLK) form a coiled coil. The span at 1266–1276 (KKVGRAKRESR) shows a compositional bias: basic residues. Serine 1300 and serine 1318 each carry phosphoserine. A disordered region spans residues 1342-1401 (KSKPESLILDEGELKISSPNTFTNPKSQDNALSASSETSSTLAGKGASSDSEHLKNGTAK). Polar residues predominate over residues 1358 to 1371 (SSPNTFTNPKSQDN). A compositionally biased stretch (low complexity) spans 1372–1384 (ALSASSETSSTLA). Over residues 1391–1401 (DSEHLKNGTAK) the composition is skewed to basic and acidic residues. Residues 1492–1539 (TVLKKLEKLNIEKEKRQKQLQQQNEKEMMEQIRQQTDILEKERKAFKT) adopt a coiled-coil conformation. 4 disordered regions span residues 1650 to 1675 (RSTE…REGS), 1693 to 1727 (SGNP…SVDE), 1767 to 1793 (GKQG…PGPD), and 1806 to 1841 (QYHP…KRGV). A compositionally biased stretch (basic and acidic residues) spans 1665 to 1675 (HRSDDPSREGS). Polar residues predominate over residues 1715–1726 (QQETSQRFSSVD). Basic and acidic residues predominate over residues 1821–1833 (CRKEFKENKEPSP). A Phosphoserine modification is found at serine 1950. Phorbol-ester/DAG-type zinc fingers lie at residues 2001–2050 (GHIF…TAKC) and 2068–2119 (SRLT…DTDA). The Rho-GAP domain occupies 2065–2253 (VELSRLTSED…LIVVEQMNKY (189 aa)). 2 positions are modified to phosphoserine: serine 2293 and serine 2296. A coiled-coil region spans residues 2324-2360 (TDQQQAAMQQEEKVLTEQIENLQKEKEELTFEMLVLE). Residues 2361–2443 (PRASDDETLE…NTTSSHGTRK (83 aa)) form a disordered region. Polar residues predominate over residues 2377–2386 (TADSSENLNM). Low complexity predominate over residues 2420–2438 (SLDSVSSSVSSCLSNTTSS). Residue serine 2458 is modified to Phosphoserine. Residues 2465–2530 (TEGPLGQAKS…TVDSDCSSTQ (66 aa)) form a disordered region.

The protein belongs to the TRAFAC class myosin-kinesin ATPase superfamily. Myosin family. Phosphorylated by ALPK1 following monosodium urate monohydrate (MSU)-induced inflammation. In terms of tissue distribution, expressed in the eye, lung, liver, brain, heart, kidney, skeletal muscle and spleen. No detection was found in liver. In the brain, expressed in the ependymal cells of the third ventricle and the aqueduct.

It localises to the membrane. It is found in the cytoplasm. The protein resides in the synapse. Its subcellular location is the cell projection. The protein localises to the growth cone. Myosins are actin-based motor molecules with ATPase activity. Unconventional myosins serve in intracellular movements. Regulates Rho by stimulating it's GTPase activity in neurons. Required for the regulation of neurite branching and motor neuron axon guidance. This is Unconventional myosin-IXa (Myo9a) from Mus musculus (Mouse).